Reading from the N-terminus, the 319-residue chain is 1-aminocyclopropane-1-carboxylate oxidase 1 (319 aa).

The Fe2OG dioxygenase domain occupies 153 to 253 (PNFGTKVSNY…RMSLASFYNP (101 aa)). Residues histidine 177, aspartate 179, and histidine 234 each coordinate Fe cation.

This sequence belongs to the iron/ascorbate-dependent oxidoreductase family. The cofactor is Fe cation.

It catalyses the reaction 1-aminocyclopropane-1-carboxylate + L-ascorbate + O2 = ethene + L-dehydroascorbate + hydrogen cyanide + CO2 + 2 H2O. It participates in alkene biosynthesis; ethylene biosynthesis via S-adenosyl-L-methionine; ethylene from S-adenosyl-L-methionine: step 2/2. This chain is 1-aminocyclopropane-1-carboxylate oxidase 1 (ACO1), found in Petunia hybrida (Petunia).